The sequence spans 442 residues: Probable serine/threonine-protein kinase kinase DDB_G0280643 (442 aa).

One can recognise a Protein kinase domain in the interval 74-398 (IDPNTIVDCG…VNEILESPYF (325 aa)). Residues 80-88 (VDCGTNGIM) and K103 each bind ATP. D231 (proton acceptor) is an active-site residue.

It belongs to the protein kinase superfamily. CMGC Ser/Thr protein kinase family. MAP kinase subfamily.

It catalyses the reaction L-seryl-[protein] + ATP = O-phospho-L-seryl-[protein] + ADP + H(+). The catalysed reaction is L-threonyl-[protein] + ATP = O-phospho-L-threonyl-[protein] + ADP + H(+). The sequence is that of Probable serine/threonine-protein kinase kinase DDB_G0280643 from Dictyostelium discoideum (Social amoeba).